We begin with the raw amino-acid sequence, 326 residues long: E3 ubiquitin-protein ligase SINAT3 (326 aa).

The tract at residues 1 to 44 (MDLDSMDCTSTMDVTDDEEIHQDRHSYASVSKHHHTNNNTTNVN) is disordered. The RING-type zinc-finger motif lies at 63 to 99 (CPVCTNSMYPPIHQCHNGHTLCSTCKARVHNRCPTCR). Residues 113–306 (VAESLELPCK…KELKLRVTGR (194 aa)) form an SBD region. An SIAH-type zinc finger spans residues 116-176 (SLELPCKHMS…LVAHLRDDHK (61 aa)). Zn(2+) is bound by residues Cys-121, Cys-128, His-140, Cys-144, Cys-151, Cys-158, His-170, and His-175.

This sequence belongs to the SINA (Seven in absentia) family. In terms of assembly, interacts with SINAT6. Interacts with WAV3. Interacts with FREE1. Interacts with ELC/VPS23A.

The protein localises to the endosome. It localises to the multivesicular body. The protein resides in the cytoplasmic vesicle. Its subcellular location is the autophagosome. The catalysed reaction is S-ubiquitinyl-[E2 ubiquitin-conjugating enzyme]-L-cysteine + [acceptor protein]-L-lysine = [E2 ubiquitin-conjugating enzyme]-L-cysteine + N(6)-ubiquitinyl-[acceptor protein]-L-lysine.. It participates in protein modification; protein ubiquitination. Functionally, E3 ubiquitin-protein ligase that mediates ubiquitination and subsequent proteasomal degradation of target proteins. E3 ubiquitin ligases accept ubiquitin from an E2 ubiquitin-conjugating enzyme in the form of a thioester and then directly transfers the ubiquitin to targeted substrates. It probably triggers the ubiquitin-mediated degradation of different substrates. Modulates directly the ubiquitination and proteasomal-dependent degradation of FREE1, a component of the ESCRT-I complex. Modulates directly the ubiquitination and proteasomal-dependent degradation of ELC/VPS23A, a component of the ESCRT-I complex. The protein is E3 ubiquitin-protein ligase SINAT3 of Arabidopsis thaliana (Mouse-ear cress).